Consider the following 600-residue polypeptide: Prostaglandin G/H synthase 1 (600 aa).

The signal sequence occupies residues 1–24 (MSRQSISLRFPLLLLLLSPSPVFS). Residues 32–70 (PVNPCCYYPCQHQGICVRFGLDRYQCDCTRTGYSGPNCT) enclose the EGF-like domain. 4 disulfides stabilise this stretch: Cys-36-Cys-47, Cys-37-Cys-159, Cys-41-Cys-57, and Cys-59-Cys-69. A glycan (N-linked (GlcNAc...) asparagine) is linked at Asn-68. The next 4 membrane-spanning stretches (helical) occupy residues 74 to 82 (IWTWLRTTL), 86 to 92 (PSFIHFL), 97 to 105 (RWLWDFVNA), and 108 to 122 (IRDT…VRSN). A glycan (N-linked (GlcNAc...) asparagine) is linked at Asn-144. Residue His-207 is the Proton acceptor of the active site. Residue Tyr-385 is the For cyclooxygenase activity of the active site. Position 388 (His-388) interacts with heme b. A glycan (N-linked (GlcNAc...) asparagine) is linked at Asn-410. Cys-569 and Cys-575 form a disulfide bridge.

The protein belongs to the prostaglandin G/H synthase family. As to quaternary structure, homodimer. It depends on heme b as a cofactor.

Its subcellular location is the endoplasmic reticulum membrane. It is found in the microsome membrane. The catalysed reaction is (5Z,8Z,11Z,14Z)-eicosatetraenoate + AH2 + 2 O2 = prostaglandin H2 + A + H2O. The enzyme catalyses (5Z,8Z,11Z,14Z)-eicosatetraenoate + 2 O2 = prostaglandin G2. It catalyses the reaction prostaglandin G2 + AH2 = prostaglandin H2 + A + H2O. It carries out the reaction (9Z,12Z)-octadecadienoate + AH2 + O2 = (9R)-hydroxy-(10E,12Z)-octadecadienoate + A + H2O. The catalysed reaction is (9Z,12Z)-octadecadienoate + AH2 + O2 = (9S)-hydroxy-(10E,12Z)-octadecadienoate + A + H2O. The enzyme catalyses (9Z,12Z)-octadecadienoate + AH2 + O2 = (13S)-hydroxy-(9Z,11E)-octadecadienoate + A + H2O. It catalyses the reaction (9Z,12Z)-octadecadienoate + AH2 + O2 = (13R)-hydroxy-(9Z,11E)-octadecadienoate + A + H2O. It participates in lipid metabolism; prostaglandin biosynthesis. Its activity is regulated as follows. The cyclooxygenase activity is inhibited by nonsteroidal anti-inflammatory drugs (NSAIDs) including ibuprofen, flurbiprofen, ketoprofen, naproxen, flurbiprofen, anirolac, fenclofenac and diclofenac. In terms of biological role, dual cyclooxygenase and peroxidase that plays an important role in the biosynthesis pathway of prostanoids, a class of C20 oxylipins mainly derived from arachidonate ((5Z,8Z,11Z,14Z)-eicosatetraenoate, AA, C20:4(n-6)), with a particular role in the inflammatory response. The cyclooxygenase activity oxygenates AA to the hydroperoxy endoperoxide prostaglandin G2 (PGG2), and the peroxidase activity reduces PGG2 to the hydroxy endoperoxide prostaglandin H2 (PGH2), the precursor of all 2-series prostaglandins and thromboxanes. This complex transformation is initiated by abstraction of hydrogen at carbon 13 (with S-stereochemistry), followed by insertion of molecular O2 to form the endoperoxide bridge between carbon 9 and 11 that defines prostaglandins. The insertion of a second molecule of O2 (bis-oxygenase activity) yields a hydroperoxy group in PGG2 that is then reduced to PGH2 by two electrons. Involved in the constitutive production of prostanoids in particular in the stomach and platelets. In gastric epithelial cells, it is a key step in the generation of prostaglandins, such as prostaglandin E2 (PGE2), which plays an important role in cytoprotection. In platelets, it is involved in the generation of thromboxane A2 (TXA2), which promotes platelet activation and aggregation, vasoconstriction and proliferation of vascular smooth muscle cells. Can also use linoleate (LA, (9Z,12Z)-octadecadienoate, C18:2(n-6)) as substrate and produce hydroxyoctadecadienoates (HODEs) in a regio- and stereospecific manner, being (9R)-HODE ((9R)-hydroxy-(10E,12Z)-octadecadienoate) and (13S)-HODE ((13S)-hydroxy-(9Z,11E)-octadecadienoate) its major products. The chain is Prostaglandin G/H synthase 1 (PTGS1) from Ovis aries (Sheep).